The primary structure comprises 133 residues: Fatty acid-binding protein, heart (133 aa).

An N-acetylvaline modification is found at V2. T8 carries the phosphothreonine modification. Phosphotyrosine; by Tyr-kinases is present on Y20. At S23 the chain carries Phosphoserine. Residue T30 is modified to Phosphothreonine. Position 83 is a phosphoserine (S83). Residue R127 to Y129 participates in (9Z)-octadecenoate binding. R127–Y129 contributes to the hexadecanoate binding site. R127 to Y129 contacts octadecanoate.

This sequence belongs to the calycin superfamily. Fatty-acid binding protein (FABP) family.

It is found in the cytoplasm. FABPs are thought to play a role in the intracellular transport of long-chain fatty acids and their acyl-CoA esters. The protein is Fatty acid-binding protein, heart (FABP3) of Bos mutus grunniens (Wild yak).